The chain runs to 200 residues: Sperm acrosome developmental regulator (200 aa).

The residue at position 63 (serine 63) is a Phosphoserine. The segment covering 167–183 has biased composition (basic residues); sequence QERRRRRRMRSHASHTS. Positions 167-200 are disordered; it reads QERRRRRRMRSHASHTSRHSESVQGLKHDARSPL. The span at 184 to 200 shows a compositional bias: basic and acidic residues; sequence RHSESVQGLKHDARSPL.

It localises to the cytoplasmic vesicle. It is found in the secretory vesicle. The protein resides in the acrosome. In terms of biological role, may play an important role in acrosome formation and nucleus shaping during spermiogenesis. This chain is Sperm acrosome developmental regulator (Spacdr), found in Rattus norvegicus (Rat).